Here is a 1295-residue protein sequence, read N- to C-terminus: Phosphoribosylformylglycinamidine synthase (1295 aa).

ATP-binding positions include 305 to 316, 384 to 386, and Ala-676; these read GAATGSGGEIRD and TGY. 4 residues coordinate Mg(2+): Asp-677, Glu-716, Asn-720, and Asp-884. Ser-886 lines the ATP pocket. A Glutamine amidotransferase type-1 domain is found at 1042-1295; sequence VAILREQGVN…MFRNARKHLG (254 aa). The active-site Nucleophile is the Cys-1135. Catalysis depends on residues His-1260 and Glu-1262.

It in the N-terminal section; belongs to the FGAMS family. As to quaternary structure, monomer.

It is found in the cytoplasm. The catalysed reaction is N(2)-formyl-N(1)-(5-phospho-beta-D-ribosyl)glycinamide + L-glutamine + ATP + H2O = 2-formamido-N(1)-(5-O-phospho-beta-D-ribosyl)acetamidine + L-glutamate + ADP + phosphate + H(+). It functions in the pathway purine metabolism; IMP biosynthesis via de novo pathway; 5-amino-1-(5-phospho-D-ribosyl)imidazole from N(2)-formyl-N(1)-(5-phospho-D-ribosyl)glycinamide: step 1/2. Phosphoribosylformylglycinamidine synthase involved in the purines biosynthetic pathway. Catalyzes the ATP-dependent conversion of formylglycinamide ribonucleotide (FGAR) and glutamine to yield formylglycinamidine ribonucleotide (FGAM) and glutamate. This chain is Phosphoribosylformylglycinamidine synthase, found in Idiomarina loihiensis (strain ATCC BAA-735 / DSM 15497 / L2-TR).